An 86-amino-acid polypeptide reads, in one-letter code: Putative regulatory protein Desal_2819 (86 aa).

This sequence belongs to the RemA family.

The chain is Putative regulatory protein Desal_2819 from Maridesulfovibrio salexigens (strain ATCC 14822 / DSM 2638 / NCIMB 8403 / VKM B-1763) (Desulfovibrio salexigens).